The sequence spans 301 residues: Probable alpha-L-glutamate ligase (301 aa).

An ATP-grasp domain is found at 104–287; the sequence is LQLLSRRGIG…VAGMIIEHLE (184 aa). Residues lysine 141, 178–179, aspartate 187, and 211–213 contribute to the ATP site; these read EY and RSN. Mg(2+)-binding residues include aspartate 248, glutamate 260, and asparagine 262. Aspartate 248, glutamate 260, and asparagine 262 together coordinate Mn(2+).

Belongs to the RimK family. Mg(2+) serves as cofactor. Requires Mn(2+) as cofactor.

In Pseudomonas putida (strain ATCC 700007 / DSM 6899 / JCM 31910 / BCRC 17059 / LMG 24140 / F1), this protein is Probable alpha-L-glutamate ligase.